The primary structure comprises 300 residues: 4-hydroxy-tetrahydrodipicolinate synthase (300 aa).

Thr-45 is a pyruvate binding site. Residue Tyr-140 is the Proton donor/acceptor of the active site. Lys-169 (schiff-base intermediate with substrate) is an active-site residue. Ile-210 contributes to the pyruvate binding site.

This sequence belongs to the DapA family. Homotetramer; dimer of dimers.

The protein resides in the cytoplasm. The catalysed reaction is L-aspartate 4-semialdehyde + pyruvate = (2S,4S)-4-hydroxy-2,3,4,5-tetrahydrodipicolinate + H2O + H(+). It functions in the pathway amino-acid biosynthesis; L-lysine biosynthesis via DAP pathway; (S)-tetrahydrodipicolinate from L-aspartate: step 3/4. Its function is as follows. Catalyzes the condensation of (S)-aspartate-beta-semialdehyde [(S)-ASA] and pyruvate to 4-hydroxy-tetrahydrodipicolinate (HTPA). The protein is 4-hydroxy-tetrahydrodipicolinate synthase of Helicobacter pylori (strain P12).